A 547-amino-acid polypeptide reads, in one-letter code: Cytochrome P450 monooxygenase 81 (547 aa).

Helical transmembrane passes span 6 to 23 and 106 to 124; these read IPTQLGIAGAVAVLLFLL and AFFAMTYLLFGPGLLATAG. Cys-483 serves as a coordination point for heme. Asn-503 and Asn-516 each carry an N-linked (GlcNAc...) asparagine glycan.

The protein belongs to the cytochrome P450 family. Heme serves as cofactor.

Its subcellular location is the membrane. It functions in the pathway secondary metabolite biosynthesis. Functionally, cytochrome P450 monooxygenase that is able to use dehydroabietic acid as a substrate for oxidation. The protein is Cytochrome P450 monooxygenase 81 of Postia placenta (strain ATCC 44394 / Madison 698-R) (Brown rot fungus).